Consider the following 380-residue polypeptide: Cytochrome b (380 aa).

The next 4 membrane-spanning stretches (helical) occupy residues 34-54, 78-99, 114-134, and 179-199; these read FGSL…LLAM, WLLH…FLHI, WNTG…GYVL, and FFAL…IHLM. The heme b site is built by His84 and His98. Residues His183 and His197 each contribute to the heme b site. Residue His202 participates in a ubiquinone binding. Transmembrane regions (helical) follow at residues 227–247, 289–309, 321–341, and 348–368; these read IKDI…TLFS, LGGV…PFLH, LSQT…WVGS, and FIII…ILFP.

Belongs to the cytochrome b family. The cytochrome bc1 complex contains 11 subunits: 3 respiratory subunits (MT-CYB, CYC1 and UQCRFS1), 2 core proteins (UQCRC1 and UQCRC2) and 6 low-molecular weight proteins (UQCRH/QCR6, UQCRB/QCR7, UQCRQ/QCR8, UQCR10/QCR9, UQCR11/QCR10 and a cleavage product of UQCRFS1). This cytochrome bc1 complex then forms a dimer. Requires heme b as cofactor.

Its subcellular location is the mitochondrion inner membrane. In terms of biological role, component of the ubiquinol-cytochrome c reductase complex (complex III or cytochrome b-c1 complex) that is part of the mitochondrial respiratory chain. The b-c1 complex mediates electron transfer from ubiquinol to cytochrome c. Contributes to the generation of a proton gradient across the mitochondrial membrane that is then used for ATP synthesis. The polypeptide is Cytochrome b (MT-CYB) (Meleagris gallopavo (Wild turkey)).